A 251-amino-acid polypeptide reads, in one-letter code: GTP cyclohydrolase 1 type 2 homolog (251 aa).

A divalent metal cation contacts are provided by histidine 64, histidine 65, aspartate 102, histidine 219, and glutamate 223.

Belongs to the GTP cyclohydrolase I type 2/NIF3 family. In terms of assembly, homohexamer.

The chain is GTP cyclohydrolase 1 type 2 homolog from Chlamydia muridarum (strain MoPn / Nigg).